The following is a 1069-amino-acid chain: Protogenin B (1069 aa).

The N-terminal stretch at 1–26 (MGSVRWKTHQQWLIIFWILSFSGVFG) is a signal peptide. Residues 27 to 936 (FSELWFSIEP…LYHIDEKSMS (910 aa)) are Extracellular-facing. 4 consecutive Ig-like domains span residues 30–117 (LWFS…ARLT), 122–208 (LVFS…AELV), 221–308 (PLII…GNVT), and 312–396 (PSLV…SRLI). Intrachain disulfides connect cysteine 51–cysteine 100 and cysteine 143–cysteine 191. N-linked (GlcNAc...) asparagine glycans are attached at residues asparagine 81, asparagine 88, asparagine 180, and asparagine 229. Cysteine 242 and cysteine 290 are oxidised to a cystine. N-linked (GlcNAc...) asparagine glycans are attached at residues asparagine 299 and asparagine 306. Residues 317-336 (KPESQTRPRAGTARFSCQAE) form a disordered region. Cysteines 333 and 380 form a disulfide. 5 Fibronectin type-III domains span residues 406-500 (APRN…TLED), 502-601 (PLRT…TPKT), 608-701 (PAPN…CPST), 711-804 (PPDH…TLLE), and 809-904 (PPES…VKGK). Asparagine 458, asparagine 473, and asparagine 560 each carry an N-linked (GlcNAc...) asparagine glycan. A compositionally biased stretch (polar residues) spans 590–605 (PSAWSSHRTPKTSSAT). The segment at 590 to 609 (PSAWSSHRTPKTSSATVPPA) is disordered. N-linked (GlcNAc...) asparagine glycosylation is found at asparagine 618, asparagine 720, and asparagine 834. Residues 937–957 (GIIVGVCIALSCIILCIFILL) form a helical membrane-spanning segment. At 958 to 1069 (SKTQTQKSAS…KTVLCYEDEA (112 aa)) the chain is on the cytoplasmic side.

It belongs to the immunoglobulin superfamily. DCC family. As to expression, initially expressed in the ventral forebrain and ventral spinal cord. Later, also expressed in the midbrain and in parts of the diencephalon and hindbrain.

It localises to the membrane. Its function is as follows. May play a role in anteroposterior axis elongation. This chain is Protogenin B, found in Danio rerio (Zebrafish).